Here is a 230-residue protein sequence, read N- to C-terminus: Ureidoacrylate amidohydrolase RutB (230 aa).

Asp24 functions as the Proton acceptor in the catalytic mechanism. Residue Lys133 is part of the active site. The active-site Nucleophile is Cys166.

It belongs to the isochorismatase family. RutB subfamily.

It carries out the reaction (Z)-3-ureidoacrylate + H2O + H(+) = (Z)-3-aminoacrylate + NH4(+) + CO2. The catalysed reaction is (Z)-3-ureidoacrylate + H2O = (Z)-3-aminoacrylate + carbamate + H(+). It catalyses the reaction (Z)-2-methylureidoacrylate + H2O + H(+) = (Z)-2-methylaminoacrylate + NH4(+) + CO2. Its function is as follows. Hydrolyzes ureidoacrylate to form aminoacrylate and carbamate. The carbamate hydrolyzes spontaneously, thereby releasing one of the nitrogen atoms of the pyrimidine ring as ammonia and one of its carbon atoms as CO2. The protein is Ureidoacrylate amidohydrolase RutB of Escherichia coli O6:K15:H31 (strain 536 / UPEC).